A 258-amino-acid chain; its full sequence is Pyridoxal phosphate homeostasis protein (258 aa).

N6-(pyridoxal phosphate)lysine is present on K47.

Belongs to the pyridoxal phosphate-binding protein YggS/PROSC family.

Pyridoxal 5'-phosphate (PLP)-binding protein, which is involved in PLP homeostasis. In Mycobacterium bovis (strain ATCC BAA-935 / AF2122/97), this protein is Pyridoxal phosphate homeostasis protein.